The sequence spans 80 residues: Acyl carrier protein (80 aa).

Residues 4 to 79 (EEIFNKIKDL…DAVSYIKSHQ (76 aa)) form the Carrier domain. At Ser-39 the chain carries O-(pantetheine 4'-phosphoryl)serine.

Belongs to the acyl carrier protein (ACP) family. 4'-phosphopantetheine is transferred from CoA to a specific serine of apo-ACP by AcpS. This modification is essential for activity because fatty acids are bound in thioester linkage to the sulfhydryl of the prosthetic group.

It is found in the cytoplasm. The protein operates within lipid metabolism; fatty acid biosynthesis. Its function is as follows. Carrier of the growing fatty acid chain in fatty acid biosynthesis. This chain is Acyl carrier protein, found in Lactobacillus acidophilus (strain ATCC 700396 / NCK56 / N2 / NCFM).